A 388-amino-acid chain; its full sequence is Regulator of G-protein signaling 20 (388 aa).

The segment at 138–199 is disordered; it reads PGRPSGGRPL…TPGAAPGQPG (62 aa). The segment covering 185–197 has biased composition (low complexity); the sequence is PAAQDTPGAAPGQ. An RGS domain is found at 262–378; it reads SFDKLMVTPA…MNSAVYKDLL (117 aa).

Forms a complex with G(alpha)z/i2 subunits and mu-opioid receptors; the formation of this complex results in mu-opioid receptor desensitization. Interacts with OPRM1. Fatty acylated. Heavily palmitoylated in the cysteine string motif. Post-translationally, N- and O-glycosylated in synapsomal membranes. In terms of processing, serine phosphorylated in synapsomal membranes. Sumoylated with SUMO1 and SUMO2 in synaptosomes. The sumoylated forms act as a scaffold for sequestering mu-opioid receptor-activated G(alpha) subunits. In terms of tissue distribution, isoform 5 is expressed in brain at high levels in the caudate nucleus and temporal lobe.

Its subcellular location is the membrane. The protein resides in the nucleus. The protein localises to the cytoplasm. Functionally, inhibits signal transduction by increasing the GTPase activity of G protein alpha subunits thereby driving them into their inactive GDP-bound form. Binds selectively to G(z)-alpha and G(alpha)-i2 subunits, accelerates their GTPase activity and regulates their signaling activities. The G(z)-alpha activity is inhibited by the phosphorylation and palmitoylation of the G-protein. Negatively regulates mu-opioid receptor-mediated activation of the G-proteins. This Homo sapiens (Human) protein is Regulator of G-protein signaling 20 (RGS20).